A 438-amino-acid polypeptide reads, in one-letter code: tRNA(Ile)-lysidine synthase (438 aa).

26–31 (SGGADS) contacts ATP.

This sequence belongs to the tRNA(Ile)-lysidine synthase family.

The protein resides in the cytoplasm. The catalysed reaction is cytidine(34) in tRNA(Ile2) + L-lysine + ATP = lysidine(34) in tRNA(Ile2) + AMP + diphosphate + H(+). Ligates lysine onto the cytidine present at position 34 of the AUA codon-specific tRNA(Ile) that contains the anticodon CAU, in an ATP-dependent manner. Cytidine is converted to lysidine, thus changing the amino acid specificity of the tRNA from methionine to isoleucine. This chain is tRNA(Ile)-lysidine synthase, found in Parabacteroides distasonis (strain ATCC 8503 / DSM 20701 / CIP 104284 / JCM 5825 / NCTC 11152).